Consider the following 425-residue polypeptide: uncharacterized protein (425 aa).

The next 12 membrane-spanning stretches (helical) occupy residues 15–35 (LICA…SQML), 48–68 (LIGA…WAPL), 84–104 (MLLS…FDPL), 107–127 (LGTV…QDIV), 149–169 (INAY…LAAI), 174–194 (TVFL…LFLA), 225–245 (VIQA…DSFA), 271–291 (ALWS…KLGI), 295–315 (LWLF…LAAF), 331–351 (VVIA…VAFM), 370–390 (LSAL…GAVG), and 395–415 (FWFC…VAPL).

To E.coli AmpG and yeast YBR220c.

The protein resides in the cell inner membrane. This is an uncharacterized protein from Haemophilus influenzae (strain ATCC 51907 / DSM 11121 / KW20 / Rd).